We begin with the raw amino-acid sequence, 263 residues long: MGQKIHPTGFRLAVTRNWSSRWFADDKAFGSMLAEDIRVREYLKKKLKSASVGRVIIERPAKNARITVYSARPGVVIGKRGEDIESLKADLQRLMGVPVHVNIEEIRKPETDAQLIADSISQQLEKRIMFRRAMKRAMQNAMRLGAQGIKIMSSGRLNGIEIARTEWYREGRVPLHTLKANIDYGTSEAHTTYGVIGIKVWVYKGDMLANGELPPEAATPREEERRPRRAPRGDRPDGGRPGRPGGRGRGPRKADAAPAPEGE.

In terms of domain architecture, KH type-2 spans Val39–Arg107. A disordered region spans residues Gly211–Glu263. A compositionally biased stretch (basic and acidic residues) spans Thr219–Arg240.

It belongs to the universal ribosomal protein uS3 family. In terms of assembly, part of the 30S ribosomal subunit. Forms a tight complex with proteins S10 and S14.

Binds the lower part of the 30S subunit head. Binds mRNA in the 70S ribosome, positioning it for translation. This chain is Small ribosomal subunit protein uS3, found in Bordetella petrii (strain ATCC BAA-461 / DSM 12804 / CCUG 43448).